A 95-amino-acid polypeptide reads, in one-letter code: Exodeoxyribonuclease 7 small subunit (95 aa).

This sequence belongs to the XseB family. As to quaternary structure, heterooligomer composed of large and small subunits.

The protein resides in the cytoplasm. The catalysed reaction is Exonucleolytic cleavage in either 5'- to 3'- or 3'- to 5'-direction to yield nucleoside 5'-phosphates.. Its function is as follows. Bidirectionally degrades single-stranded DNA into large acid-insoluble oligonucleotides, which are then degraded further into small acid-soluble oligonucleotides. In Corynebacterium aurimucosum (strain ATCC 700975 / DSM 44827 / CIP 107346 / CN-1) (Corynebacterium nigricans), this protein is Exodeoxyribonuclease 7 small subunit.